The primary structure comprises 45 residues: Large ribosomal subunit protein bL36 (45 aa).

The protein belongs to the bacterial ribosomal protein bL36 family.

In Psychrobacter sp. (strain PRwf-1), this protein is Large ribosomal subunit protein bL36.